A 364-amino-acid chain; its full sequence is Peptide chain release factor 2 (364 aa).

Q251 bears the N5-methylglutamine mark.

The protein belongs to the prokaryotic/mitochondrial release factor family. Post-translationally, methylated by PrmC. Methylation increases the termination efficiency of RF2.

Its subcellular location is the cytoplasm. Functionally, peptide chain release factor 2 directs the termination of translation in response to the peptide chain termination codons UGA and UAA. The sequence is that of Peptide chain release factor 2 from Campylobacter hominis (strain ATCC BAA-381 / DSM 21671 / CCUG 45161 / LMG 19568 / NCTC 13146 / CH001A).